Reading from the N-terminus, the 548-residue chain is MAELTISAADIQGAIEDYVANFATDTEREEIGTVIDAGDGIAHVEGLPSVMTQELLEFPGGVLGVALNLDEHSIGAVILGDFEKIEEGQQVKRTGEVLSVPVGDGYLGRVVNPLGQPIDGRGEIETTDRRALELQAPSVVQRQGVSEPLQTGIKAIDSQTPIGRGQRQLIIGDRKTGKTAVCVDTILNQRQNWETGDPNQQVRCVYVAIGQKGTTIASVRRTLEEGGAMDYTTIVAAPASDSAGFKWLAPYTGSAIAQHWMYDGKHVLIVFDDLTKHAEAYRAISLLLRRPPGREAFPGDVFYLHSRLLERCAKLSDELGGGSMTGLPLIETKANDISAYIPTNVISITDGQCFLETDLFNQGVRPAINVGVSVSRVGGAAQIKAMKEVAGSLRLDLSQYRELESFAAFASDLDATSKAQLDRGARLVELLKQPQNSPMPVEEQVVAIFLGTRGHLDTVPVEDVQRFEQELLEHVRSSKEEIFTEIRESKKLSDELEKTLTDVVNEFKKGFETTSGESVVPDENVEAMSEDDVEKESVKVRKPAPKKK.

Glycine 172–threonine 179 lines the ATP pocket. The tract at residues phenylalanine 511–lysine 548 is disordered. Residues glutamate 523 to glutamate 534 show a composition bias toward acidic residues.

The protein belongs to the ATPase alpha/beta chains family. As to quaternary structure, F-type ATPases have 2 components, CF(1) - the catalytic core - and CF(0) - the membrane proton channel. CF(1) has five subunits: alpha(3), beta(3), gamma(1), delta(1), epsilon(1). CF(0) has three main subunits: a(1), b(2) and c(9-12). The alpha and beta chains form an alternating ring which encloses part of the gamma chain. CF(1) is attached to CF(0) by a central stalk formed by the gamma and epsilon chains, while a peripheral stalk is formed by the delta and b chains.

It is found in the cell membrane. The catalysed reaction is ATP + H2O + 4 H(+)(in) = ADP + phosphate + 5 H(+)(out). Its function is as follows. Produces ATP from ADP in the presence of a proton gradient across the membrane. The alpha chain is a regulatory subunit. In Mycobacterium sp. (strain JLS), this protein is ATP synthase subunit alpha.